Consider the following 355-residue polypeptide: DNA polymerase IV (355 aa).

Residues Ile4–Gly185 enclose the UmuC domain. Mg(2+) is bound by residues Asp8 and Asp103. Glu104 is an active-site residue.

This sequence belongs to the DNA polymerase type-Y family. In terms of assembly, monomer. The cofactor is Mg(2+).

It localises to the cytoplasm. It carries out the reaction DNA(n) + a 2'-deoxyribonucleoside 5'-triphosphate = DNA(n+1) + diphosphate. Poorly processive, error-prone DNA polymerase involved in untargeted mutagenesis. Copies undamaged DNA at stalled replication forks, which arise in vivo from mismatched or misaligned primer ends. These misaligned primers can be extended by PolIV. Exhibits no 3'-5' exonuclease (proofreading) activity. May be involved in translesional synthesis, in conjunction with the beta clamp from PolIII. The chain is DNA polymerase IV from Shewanella amazonensis (strain ATCC BAA-1098 / SB2B).